A 250-amino-acid polypeptide reads, in one-letter code: Leucyl/phenylalanyl-tRNA--protein transferase (250 aa).

Belongs to the L/F-transferase family.

The protein resides in the cytoplasm. The catalysed reaction is N-terminal L-lysyl-[protein] + L-leucyl-tRNA(Leu) = N-terminal L-leucyl-L-lysyl-[protein] + tRNA(Leu) + H(+). It carries out the reaction N-terminal L-arginyl-[protein] + L-leucyl-tRNA(Leu) = N-terminal L-leucyl-L-arginyl-[protein] + tRNA(Leu) + H(+). It catalyses the reaction L-phenylalanyl-tRNA(Phe) + an N-terminal L-alpha-aminoacyl-[protein] = an N-terminal L-phenylalanyl-L-alpha-aminoacyl-[protein] + tRNA(Phe). Functionally, functions in the N-end rule pathway of protein degradation where it conjugates Leu, Phe and, less efficiently, Met from aminoacyl-tRNAs to the N-termini of proteins containing an N-terminal arginine or lysine. The polypeptide is Leucyl/phenylalanyl-tRNA--protein transferase (Bordetella avium (strain 197N)).